A 101-amino-acid chain; its full sequence is Urease subunit beta (101 aa).

The protein belongs to the urease beta subunit family. In terms of assembly, heterotrimer of UreA (gamma), UreB (beta) and UreC (alpha) subunits. Three heterotrimers associate to form the active enzyme.

The protein localises to the cytoplasm. It catalyses the reaction urea + 2 H2O + H(+) = hydrogencarbonate + 2 NH4(+). It functions in the pathway nitrogen metabolism; urea degradation; CO(2) and NH(3) from urea (urease route): step 1/1. In Ruegeria pomeroyi (strain ATCC 700808 / DSM 15171 / DSS-3) (Silicibacter pomeroyi), this protein is Urease subunit beta.